The following is a 105-amino-acid chain: Pyrimidine/purine nucleoside phosphorylase (105 aa).

The protein belongs to the nucleoside phosphorylase PpnP family.

The catalysed reaction is a purine D-ribonucleoside + phosphate = a purine nucleobase + alpha-D-ribose 1-phosphate. The enzyme catalyses adenosine + phosphate = alpha-D-ribose 1-phosphate + adenine. It catalyses the reaction cytidine + phosphate = cytosine + alpha-D-ribose 1-phosphate. It carries out the reaction guanosine + phosphate = alpha-D-ribose 1-phosphate + guanine. The catalysed reaction is inosine + phosphate = alpha-D-ribose 1-phosphate + hypoxanthine. The enzyme catalyses thymidine + phosphate = 2-deoxy-alpha-D-ribose 1-phosphate + thymine. It catalyses the reaction uridine + phosphate = alpha-D-ribose 1-phosphate + uracil. It carries out the reaction xanthosine + phosphate = alpha-D-ribose 1-phosphate + xanthine. Catalyzes the phosphorolysis of diverse nucleosides, yielding D-ribose 1-phosphate and the respective free bases. Can use uridine, adenosine, guanosine, cytidine, thymidine, inosine and xanthosine as substrates. Also catalyzes the reverse reactions. This is Pyrimidine/purine nucleoside phosphorylase from Albidiferax ferrireducens (strain ATCC BAA-621 / DSM 15236 / T118) (Rhodoferax ferrireducens).